The sequence spans 174 residues: Shikimate kinase 2 (174 aa).

Residue 12 to 17 (GAGKTT) participates in ATP binding. Thr16 and Asp32 together coordinate Mg(2+). Residues Asp34, Arg58, and Gly79 each contribute to the substrate site. An LID domain region spans residues 112–126 (AEDPEDAQRPSLTGK). Residue Arg120 coordinates ATP. Arg139 contacts substrate. Gln155 serves as a coordination point for ATP.

It belongs to the shikimate kinase family. AroL subfamily. Monomer. It depends on Mg(2+) as a cofactor.

The protein resides in the cytoplasm. The catalysed reaction is shikimate + ATP = 3-phosphoshikimate + ADP + H(+). Its pathway is metabolic intermediate biosynthesis; chorismate biosynthesis; chorismate from D-erythrose 4-phosphate and phosphoenolpyruvate: step 5/7. Catalyzes the specific phosphorylation of the 3-hydroxyl group of shikimic acid using ATP as a cosubstrate. The chain is Shikimate kinase 2 from Yersinia enterocolitica serotype O:8 / biotype 1B (strain NCTC 13174 / 8081).